A 227-amino-acid chain; its full sequence is 2-C-methyl-D-erythritol 4-phosphate cytidylyltransferase (227 aa).

The protein belongs to the IspD/TarI cytidylyltransferase family. IspD subfamily.

It catalyses the reaction 2-C-methyl-D-erythritol 4-phosphate + CTP + H(+) = 4-CDP-2-C-methyl-D-erythritol + diphosphate. It participates in isoprenoid biosynthesis; isopentenyl diphosphate biosynthesis via DXP pathway; isopentenyl diphosphate from 1-deoxy-D-xylulose 5-phosphate: step 2/6. Its function is as follows. Catalyzes the formation of 4-diphosphocytidyl-2-C-methyl-D-erythritol from CTP and 2-C-methyl-D-erythritol 4-phosphate (MEP). The chain is 2-C-methyl-D-erythritol 4-phosphate cytidylyltransferase from Petrotoga mobilis (strain DSM 10674 / SJ95).